A 26-amino-acid chain; its full sequence is Cytochrome c oxidase subunit 2 (26 aa).

Belongs to the cytochrome c oxidase subunit 2 family. As to quaternary structure, component of the cytochrome c oxidase (complex IV, CIV), a multisubunit enzyme composed of a catalytic core of 3 subunits and several supernumerary subunits. The complex exists as a monomer or a dimer and forms supercomplexes (SCs) in the inner mitochondrial membrane with ubiquinol-cytochrome c oxidoreductase (cytochrome b-c1 complex, complex III, CIII). It depends on Cu cation as a cofactor.

Its subcellular location is the mitochondrion inner membrane. The catalysed reaction is 4 Fe(II)-[cytochrome c] + O2 + 8 H(+)(in) = 4 Fe(III)-[cytochrome c] + 2 H2O + 4 H(+)(out). Component of the cytochrome c oxidase, the last enzyme in the mitochondrial electron transport chain which drives oxidative phosphorylation. The respiratory chain contains 3 multisubunit complexes succinate dehydrogenase (complex II, CII), ubiquinol-cytochrome c oxidoreductase (cytochrome b-c1 complex, complex III, CIII) and cytochrome c oxidase (complex IV, CIV), that cooperate to transfer electrons derived from NADH and succinate to molecular oxygen, creating an electrochemical gradient over the inner membrane that drives transmembrane transport and the ATP synthase. Cytochrome c oxidase is the component of the respiratory chain that catalyzes the reduction of oxygen to water. Electrons originating from reduced cytochrome c in the intermembrane space (IMS) are transferred via the dinuclear copper A center (CU(A)) of subunit 2 and heme A of subunit 1 to the active site in subunit 1, a binuclear center (BNC) formed by heme A3 and copper B (CU(B)). The BNC reduces molecular oxygen to 2 water molecules using 4 electrons from cytochrome c in the IMS and 4 protons from the mitochondrial matrix. This is Cytochrome c oxidase subunit 2 (COX2) from Solanum tuberosum (Potato).